The primary structure comprises 332 residues: Ferredoxin--NADP reductase 1 (332 aa).

FAD contacts are provided by aspartate 35, lysine 43, phenylalanine 48, valine 88, phenylalanine 123, aspartate 284, and threonine 325.

It belongs to the ferredoxin--NADP reductase type 2 family. In terms of assembly, homodimer. The cofactor is FAD.

It catalyses the reaction 2 reduced [2Fe-2S]-[ferredoxin] + NADP(+) + H(+) = 2 oxidized [2Fe-2S]-[ferredoxin] + NADPH. This is Ferredoxin--NADP reductase 1 from Listeria monocytogenes serovar 1/2a (strain ATCC BAA-679 / EGD-e).